A 346-amino-acid chain; its full sequence is UDP-3-O-acylglucosamine N-acyltransferase (346 aa).

H253 functions as the Proton acceptor in the catalytic mechanism.

Belongs to the transferase hexapeptide repeat family. LpxD subfamily. In terms of assembly, homotrimer.

The catalysed reaction is a UDP-3-O-[(3R)-3-hydroxyacyl]-alpha-D-glucosamine + a (3R)-hydroxyacyl-[ACP] = a UDP-2-N,3-O-bis[(3R)-3-hydroxyacyl]-alpha-D-glucosamine + holo-[ACP] + H(+). It participates in bacterial outer membrane biogenesis; LPS lipid A biosynthesis. Functionally, catalyzes the N-acylation of UDP-3-O-acylglucosamine using 3-hydroxyacyl-ACP as the acyl donor. Is involved in the biosynthesis of lipid A, a phosphorylated glycolipid that anchors the lipopolysaccharide to the outer membrane of the cell. In Rickettsia felis (strain ATCC VR-1525 / URRWXCal2) (Rickettsia azadi), this protein is UDP-3-O-acylglucosamine N-acyltransferase.